We begin with the raw amino-acid sequence, 985 residues long: DNA ligase 4 (985 aa).

Disordered stretches follow at residues 1-27 (MDRL…RNKH) and 43-70 (LNGN…QTLS). Residues 10-20 (ETERELDEKYP) show a composition bias toward basic and acidic residues. Positions 46–61 (NKKRPTGPAAARKKLG) are enriched in basic residues. Glutamate 310, lysine 312, leucine 313, arginine 317, glutamate 379, phenylalanine 420, glutamate 480, lysine 485, lysine 502, and lysine 504 together coordinate ATP. The N6-AMP-lysine intermediate role is filled by lysine 312. Glutamate 379 provides a ligand contact to Mg(2+). Glutamate 480 is a binding site for Mg(2+). BRCT domains follow at residues 711-804 (PSGH…PDLL) and 878-983 (LRGW…RFAP).

It belongs to the ATP-dependent DNA ligase family. Mg(2+) serves as cofactor.

Its subcellular location is the nucleus. It catalyses the reaction ATP + (deoxyribonucleotide)n-3'-hydroxyl + 5'-phospho-(deoxyribonucleotide)m = (deoxyribonucleotide)n+m + AMP + diphosphate.. Its function is as follows. DNA ligase involved in DNA non-homologous end joining (NHEJ); required for double-strand break (DSB) repair. This is DNA ligase 4 (LIG4) from Coccidioides immitis (strain RS) (Valley fever fungus).